Reading from the N-terminus, the 110-residue chain is Flagellar hook-basal body complex protein FliE (110 aa).

It belongs to the FliE family.

The protein resides in the bacterial flagellum basal body. This chain is Flagellar hook-basal body complex protein FliE, found in Pseudomonas putida (strain GB-1).